A 344-amino-acid polypeptide reads, in one-letter code: S-methyl-5'-thioadenosine phosphorylase (344 aa).

Residues Thr-51, 99–100 (RH), and 132–133 (SA) each bind phosphate. Residue Met-234 coordinates substrate. Ser-235 is a binding site for phosphate. A substrate-binding site is contributed by 258-260 (DYD).

It belongs to the PNP/MTAP phosphorylase family. MTAP subfamily. In terms of assembly, homotrimer.

It localises to the cytoplasm. The protein localises to the nucleus. The catalysed reaction is S-methyl-5'-thioadenosine + phosphate = 5-(methylsulfanyl)-alpha-D-ribose 1-phosphate + adenine. It participates in amino-acid biosynthesis; L-methionine biosynthesis via salvage pathway; S-methyl-5-thio-alpha-D-ribose 1-phosphate from S-methyl-5'-thioadenosine (phosphorylase route): step 1/1. Its function is as follows. Catalyzes the reversible phosphorylation of S-methyl-5'-thioadenosine (MTA) to adenine and 5-methylthioribose-1-phosphate. Involved in the breakdown of MTA, a major by-product of polyamine biosynthesis. Responsible for the first step in the methionine salvage pathway after MTA has been generated from S-adenosylmethionine. Has broad substrate specificity with 6-aminopurine nucleosides as preferred substrates. The sequence is that of S-methyl-5'-thioadenosine phosphorylase from Phaeosphaeria nodorum (strain SN15 / ATCC MYA-4574 / FGSC 10173) (Glume blotch fungus).